Reading from the N-terminus, the 322-residue chain is Arginase-1 (322 aa).

Residue lysine 17 is modified to N6-succinyllysine. Residues serine 62 and serine 72 each carry the phosphoserine modification. Position 75 is an N6-succinyllysine (lysine 75). 4 residues coordinate Mn(2+): histidine 101, aspartate 124, histidine 126, and aspartate 128. Substrate-binding positions include 126–130 (HTDIN) and 137–139 (SGN). Phosphoserine is present on serine 163. Aspartate 183 contributes to the substrate binding site. Position 217 is a phosphoserine (serine 217). Aspartate 232 and aspartate 234 together coordinate Mn(2+). The substrate site is built by threonine 246 and glutamate 277.

Belongs to the arginase family. As to quaternary structure, homotrimer. Interacts with CMTM6. It depends on Mn(2+) as a cofactor. Within the immune system initially reported to be selectively expressed in granulocytes (polymorphonuclear leukocytes [PMNs]). Also detected in macrophages mycobacterial granulomas. Expressed in group2 innate lymphoid cells (ILC2s) during lung disease.

The protein resides in the cytoplasm. The protein localises to the cytoplasmic granule. It carries out the reaction L-arginine + H2O = urea + L-ornithine. It participates in nitrogen metabolism; urea cycle; L-ornithine and urea from L-arginine: step 1/1. Key element of the urea cycle converting L-arginine to urea and L-ornithine, which is further metabolized into metabolites proline and polyamides that drive collagen synthesis and bioenergetic pathways critical for cell proliferation, respectively; the urea cycle takes place primarily in the liver and, to a lesser extent, in the kidneys. Its function is as follows. Functions in L-arginine homeostasis in nonhepatic tissues characterized by the competition between nitric oxide synthase (NOS) and arginase for the available intracellular substrate arginine. Arginine metabolism is a critical regulator of innate and adaptive immune responses. Involved in an antimicrobial effector pathway in polymorphonuclear granulocytes (PMN). Upon PMN cell death is liberated from the phagolysosome and depletes arginine in the microenvironment leading to suppressed T cell and natural killer (NK) cell proliferation and cytokine secretion. In group 2 innate lymphoid cells (ILC2s) promotes acute type 2 inflammation in the lung and is involved in optimal ILC2 proliferation but not survival. In humans, the immunological role in the monocytic/macrophage/dendritic cell (DC) lineage is unsure. This Homo sapiens (Human) protein is Arginase-1 (ARG1).